A 363-amino-acid polypeptide reads, in one-letter code: MTKQLSTSPKQDGFRMPAEHEPQSAIWMAWPERTDNWRYGAKPAQATFVEVAKAIAKTTPVTMVVSAEQFENARVVLPSYIQVLEMSTDDSWMRDIGPSYVVNDHGKRRGVDWHFNALGQIGDGLYSPWDKDDAVARKVCETLGDDSYRAPIVLEGGSIHVDGEGTLYTTEECLLHPSRNPDLTREEIEDVLKVTLSIEKVIWIPQGLYNDETNGHVDNLIHVVRPGEIALTWCDDETDPQYLISRKAMDVLLTETDAKGRQIKIHKLPMPGPLYISEDEANGVDVSEGMERVPGERLAGSYANYLISNEHIIYPLLDEKHDKDVAMLLAKLYPNYEVTGVNAREILLGGGNIHCITQQIPKV.

The span at 1 to 10 (MTKQLSTSPK) shows a compositional bias: polar residues. A disordered region spans residues 1 to 20 (MTKQLSTSPKQDGFRMPAEH). Residue Cys355 is the Amidino-cysteine intermediate of the active site.

It belongs to the agmatine deiminase family.

The catalysed reaction is agmatine + H2O = N-carbamoylputrescine + NH4(+). The protein is Putative agmatine deiminase of Photobacterium profundum (strain SS9).